Consider the following 86-residue polypeptide: EMBRYO SURROUNDING FACTOR 1-like protein 2 (86 aa).

An N-terminal signal peptide occupies residues 1 to 21; the sequence is MKSHIAIICIIMLSFFSMHEY. 4 disulfides stabilise this stretch: cysteine 39-cysteine 54, cysteine 44-cysteine 82, cysteine 52-cysteine 78, and cysteine 55-cysteine 65.

This sequence belongs to the MEG family.

This is EMBRYO SURROUNDING FACTOR 1-like protein 2 (ESFL2) from Arabidopsis thaliana (Mouse-ear cress).